The primary structure comprises 494 residues: Guanosine-5'-triphosphate,3'-diphosphate pyrophosphatase (494 aa).

This sequence belongs to the GppA/Ppx family. GppA subfamily.

The catalysed reaction is guanosine 3'-diphosphate 5'-triphosphate + H2O = guanosine 3',5'-bis(diphosphate) + phosphate + H(+). The protein operates within purine metabolism; ppGpp biosynthesis; ppGpp from GTP: step 2/2. In terms of biological role, catalyzes the conversion of pppGpp to ppGpp. Guanosine pentaphosphate (pppGpp) is a cytoplasmic signaling molecule which together with ppGpp controls the 'stringent response', an adaptive process that allows bacteria to respond to amino acid starvation, resulting in the coordinated regulation of numerous cellular activities. The sequence is that of Guanosine-5'-triphosphate,3'-diphosphate pyrophosphatase from Shigella flexneri.